Here is a 339-residue protein sequence, read N- to C-terminus: Major pollen allergen Lol p 5b (339 aa).

The first 25 residues, 1-25 (MAVQKHTVALFLAVALVAGPAASYA), serve as a signal peptide directing secretion. 9 tandem repeats follow at residues 32-34 (PAT), 35-37 (PAT), 38-40 (PAA), 41-43 (PAT), 44-46 (AAT), 47-49 (PAT), 50-52 (PAT), 53-55 (PAT), and 56-58 (PAA). A 9 X 3 AA tandem repeats of [PA]-A-[TA] region spans residues 32–58 (PATPATPAAPATAATPATPATPATPAA). The span at 36-58 (ATPAAPATAATPATPATPATPAA) shows a compositional bias: low complexity. Residues 36 to 65 (ATPAAPATAATPATPATPATPAAVPSGKAT) are disordered. A 2-1; truncated repeat occupies 285-290 (ATPAAA). Residues 285-334 (ATPAAAATATPTPAAATATATPAAAYATATPAAATATATPAAATATPAAA) form a 6 X 9 AA approximate tandem repeats of T-A-T-A-T-P-A-A-A region. Tandem repeats lie at residues 292-300 (TATPTPAAA), 301-309 (TATATPAAA), 310-318 (YATATPAAA), and 319-327 (TATATPAAA). The 2-6; truncated repeat unit spans residues 328–334 (TATPAAA).

Belongs to the Poa p IX/Phl p VI allergen family. Pollen, starch granules.

The sequence is that of Major pollen allergen Lol p 5b from Lolium perenne (Perennial ryegrass).